The sequence spans 94 residues: Acylphosphatase (94 aa).

In terms of domain architecture, Acylphosphatase-like spans 8-94 (TVHVIVKGKV…EKRYKHFAQL (87 aa)). Active-site residues include Arg23 and Asn41.

It belongs to the acylphosphatase family.

The catalysed reaction is an acyl phosphate + H2O = a carboxylate + phosphate + H(+). This chain is Acylphosphatase (acyP), found in Bordetella parapertussis (strain 12822 / ATCC BAA-587 / NCTC 13253).